Consider the following 485-residue polypeptide: Membrane-bound lytic murein transglycosylase F (485 aa).

The first 29 residues, Met-1 to Glu-29, serve as a signal peptide directing secretion. The segment at Lys-30–Val-267 is non-LT domain. Positions Asp-268–Met-485 are LT domain. Glu-314 is an active-site residue. Residues Glu-465 to Met-485 are disordered. Residues Asn-474–Met-485 are compositionally biased toward basic and acidic residues.

It in the N-terminal section; belongs to the bacterial solute-binding protein 3 family. In the C-terminal section; belongs to the transglycosylase Slt family.

Its subcellular location is the cell outer membrane. The catalysed reaction is Exolytic cleavage of the (1-&gt;4)-beta-glycosidic linkage between N-acetylmuramic acid (MurNAc) and N-acetylglucosamine (GlcNAc) residues in peptidoglycan, from either the reducing or the non-reducing ends of the peptidoglycan chains, with concomitant formation of a 1,6-anhydrobond in the MurNAc residue.. Functionally, murein-degrading enzyme that degrades murein glycan strands and insoluble, high-molecular weight murein sacculi, with the concomitant formation of a 1,6-anhydromuramoyl product. Lytic transglycosylases (LTs) play an integral role in the metabolism of the peptidoglycan (PG) sacculus. Their lytic action creates space within the PG sacculus to allow for its expansion as well as for the insertion of various structures such as secretion systems and flagella. In Pseudomonas putida (strain ATCC 47054 / DSM 6125 / CFBP 8728 / NCIMB 11950 / KT2440), this protein is Membrane-bound lytic murein transglycosylase F.